Reading from the N-terminus, the 84-residue chain is Large ribosomal subunit protein bL27 (84 aa).

The interval 1–20 (MAHKKGGGSTKNGRDSNPKY) is disordered.

Belongs to the bacterial ribosomal protein bL27 family.

In Prosthecochloris vibrioformis (Chlorobium vibrioforme), this protein is Large ribosomal subunit protein bL27 (rpmA).